The sequence spans 444 residues: ATP-dependent protease ATPase subunit HslU (444 aa).

ATP-binding positions include I18 and G60–E65. The tract at residues D141–K161 is disordered. Positions 257, 322, and 394 each coordinate ATP.

The protein belongs to the ClpX chaperone family. HslU subfamily. As to quaternary structure, a double ring-shaped homohexamer of HslV is capped on each side by a ring-shaped HslU homohexamer. The assembly of the HslU/HslV complex is dependent on binding of ATP.

The protein resides in the cytoplasm. Functionally, ATPase subunit of a proteasome-like degradation complex; this subunit has chaperone activity. The binding of ATP and its subsequent hydrolysis by HslU are essential for unfolding of protein substrates subsequently hydrolyzed by HslV. HslU recognizes the N-terminal part of its protein substrates and unfolds these before they are guided to HslV for hydrolysis. This chain is ATP-dependent protease ATPase subunit HslU, found in Aliivibrio fischeri (strain MJ11) (Vibrio fischeri).